A 567-amino-acid polypeptide reads, in one-letter code: Urease subunit alpha (567 aa).

A Urease domain is found at 129-567; that stretch reads GGIDSHIHFI…LPMAQRYFLF (439 aa). 3 residues coordinate Ni(2+): H134, H136, and K217. K217 bears the N6-carboxylysine mark. H219 lines the substrate pocket. The Ni(2+) site is built by H246 and H272. H320 serves as the catalytic Proton donor. D360 provides a ligand contact to Ni(2+).

It belongs to the metallo-dependent hydrolases superfamily. Urease alpha subunit family. Heterotrimer of UreA (gamma), UreB (beta) and UreC (alpha) subunits. Three heterotrimers associate to form the active enzyme. Requires Ni cation as cofactor. Carboxylation allows a single lysine to coordinate two nickel ions.

The protein localises to the cytoplasm. The catalysed reaction is urea + 2 H2O + H(+) = hydrogencarbonate + 2 NH4(+). It participates in nitrogen metabolism; urea degradation; CO(2) and NH(3) from urea (urease route): step 1/1. The polypeptide is Urease subunit alpha (Alcanivorax borkumensis (strain ATCC 700651 / DSM 11573 / NCIMB 13689 / SK2)).